A 72-amino-acid chain; its full sequence is Sec-independent protein translocase protein TatA (72 aa).

The chain crosses the membrane as a helical span at residues 1-21 (MGSFSIWHWLIVLAVVLLLFG). Residues 43 to 72 (MADEDAKEDPRTIDAKAEEPVKDVKKTTKS) form a disordered region. Residues 50–72 (EDPRTIDAKAEEPVKDVKKTTKS) show a composition bias toward basic and acidic residues.

It belongs to the TatA/E family. In terms of assembly, the Tat system comprises two distinct complexes: a TatABC complex, containing multiple copies of TatA, TatB and TatC subunits, and a separate TatA complex, containing only TatA subunits. Substrates initially bind to the TatABC complex, which probably triggers association of the separate TatA complex to form the active translocon.

The protein resides in the cell inner membrane. Functionally, part of the twin-arginine translocation (Tat) system that transports large folded proteins containing a characteristic twin-arginine motif in their signal peptide across membranes. TatA could form the protein-conducting channel of the Tat system. This chain is Sec-independent protein translocase protein TatA, found in Brucella suis biovar 1 (strain 1330).